The chain runs to 508 residues: Kinesin light chain 3 (508 aa).

The segment at 1–20 (MSVQVAAPGSTGLGPERLNP) is disordered. Residues 88–150 (LLALSAHVSV…EEEKSHLQFL (63 aa)) are a coiled coil. Residues 154 to 197 (RQYDPPEESQRPESPPRRDSLASLFPSEEEEKKGPEAAGAAAAQ) form a disordered region. Residues 161-173 (ESQRPESPPRRDS) are compositionally biased toward basic and acidic residues. Serine 173 carries the post-translational modification Phosphoserine. 5 TPR repeats span residues 207–240 (LRTL…LERS), 249–282 (ATML…REQT), 291–324 (AATL…REKV), 333–366 (AKQL…YEAL), and 375–408 (AKTK…EALP). Residues 409–441 (APLGAPQGGTAGDTQQQVLRRSSSFSKLRESIR) are disordered. The span at 420–434 (GDTQQQVLRRSSSFS) shows a compositional bias: polar residues. Serine 467 is modified (phosphoserine). The tract at residues 486 to 508 (LSTRHLSEAPRTLSISTQDLSPR) is disordered. A compositionally biased stretch (polar residues) spans 498–508 (LSISTQDLSPR). Threonine 502 is subject to Phosphothreonine. At serine 506 the chain carries Phosphoserine.

The protein belongs to the kinesin light chain family. In terms of assembly, oligomer composed of two heavy chains and two light chains. Associates with microtubulin in an ATP-dependent manner. Interacts with KIF5C. Interacts with ODF1. Interacts with LRGUK. Interacts with VDAC2. As to expression, expressed in postmeiotic male germ cells (at protein level). Expressed in the testes (at protein level). Expressed in spleen, intestine, brain and ovary.

The protein localises to the cytoplasm. It localises to the cytoskeleton. Its subcellular location is the mitochondrion. Kinesin is a microtubule-associated force-producing protein that may play a role in organelle transport. Plays a role during spermiogenesis in the development of the sperm tail midpiece and in the normal function of spermatozoa. May play a role in the formation of the mitochondrial sheath formation in the developing spermatid midpiece. This Mus musculus (Mouse) protein is Kinesin light chain 3 (Klc3).